The primary structure comprises 143 residues: Large ribosomal subunit protein uL13 (143 aa).

Belongs to the universal ribosomal protein uL13 family. As to quaternary structure, part of the 50S ribosomal subunit.

Its function is as follows. This protein is one of the early assembly proteins of the 50S ribosomal subunit, although it is not seen to bind rRNA by itself. It is important during the early stages of 50S assembly. The chain is Large ribosomal subunit protein uL13 from Prochlorococcus marinus (strain MIT 9312).